The primary structure comprises 56 residues: Small ribosomal subunit protein bS21 (56 aa).

This sequence belongs to the bacterial ribosomal protein bS21 family.

The sequence is that of Small ribosomal subunit protein bS21 from Dictyoglomus thermophilum (strain ATCC 35947 / DSM 3960 / H-6-12).